Here is a 339-residue protein sequence, read N- to C-terminus: MQDKLNQIKELALVEIKKAKDSTTIDTIRVKYLGKKGELTTILRGMGSLSKEERPIVGKLANEVREVLEAELEAVTKAVKEAEKQEKLKNEVIDISMPGKKQTIGKKHPLEQTLDEMKKIFVSMGFAIEDGPEVEKDYYNFEALNIPKNHPARSEQDTFYINDNIVLRTQTSPVQARVMEKQQPPIKMISPGKVFRSDAVDATHSPIFYQMEGLVIDKDITFADLKGTLELFAKKMFGDKVKTKFRPHHFPFTEPSAEMDATCFVCNGKGCKVCKGEGWIEILGCGMVHPQVLRNCGIDPEVYSGFAFGFGVDRMVMLKYGIDDIRLLYESDMRFLNQF.

Glu-254 contacts Mg(2+).

This sequence belongs to the class-II aminoacyl-tRNA synthetase family. Phe-tRNA synthetase alpha subunit type 1 subfamily. Tetramer of two alpha and two beta subunits. Mg(2+) is required as a cofactor.

Its subcellular location is the cytoplasm. It catalyses the reaction tRNA(Phe) + L-phenylalanine + ATP = L-phenylalanyl-tRNA(Phe) + AMP + diphosphate + H(+). The chain is Phenylalanine--tRNA ligase alpha subunit from Clostridium perfringens (strain SM101 / Type A).